The primary structure comprises 121 residues: Colipase-like protein 1 (121 aa).

Positions 1-23 are cleaved as a signal peptide; that stretch reads MMLPQWLLLLFLLFFFLFLLTRG. Cystine bridges form between Cys39-Cys50, Cys45-Cys61, Cys49-Cys83, Cys71-Cys91, and Cys85-Cys107.

This sequence belongs to the colipase family. In terms of tissue distribution, exclusively expressed in epididymis, in the corpus region.

Its subcellular location is the secreted. This chain is Colipase-like protein 1 (CLPSL1), found in Homo sapiens (Human).